A 308-amino-acid polypeptide reads, in one-letter code: MTIALELQQLKKTYPGGVQALRGIDLQVEAGDFYALLGPNGAGKSTTIGIISSLVNKTSGRVSVFGYDLEKDVVNAKRQLGLVPQEFNFNPFETVQQIVVNQAGYYGVERKEAYIRSEKYLKQLDLWGKRNERARMLSGGMKRRLMIARALMHEPKLLILDEPTAGVDIELRRSMWGFLKDLNDKGTTIILTTHYLEEAEMLCRNIGIIQHGELVENTSMKALLAKLKSETFILDLAPKSPLPKLDGYQYRLVDTATLEVEVLREQGINSVFTQLSEQGIQVLSMRNKANRLEELFVSLVNEKQGDRA.

An ABC transporter domain is found at 5 to 236 (LELQQLKKTY…LKSETFILDL (232 aa)). ATP is bound at residue 38-45 (GPNGAGKS).

This sequence belongs to the ABC transporter superfamily.

This is an uncharacterized protein from Escherichia coli (strain K12).